A 126-amino-acid chain; its full sequence is uncharacterized protein (126 aa).

This is an uncharacterized protein from Bacillus subtilis (strain 168).